A 217-amino-acid polypeptide reads, in one-letter code: Probable nicotinate-nucleotide adenylyltransferase (217 aa).

Belongs to the NadD family.

It catalyses the reaction nicotinate beta-D-ribonucleotide + ATP + H(+) = deamido-NAD(+) + diphosphate. It participates in cofactor biosynthesis; NAD(+) biosynthesis; deamido-NAD(+) from nicotinate D-ribonucleotide: step 1/1. Its function is as follows. Catalyzes the reversible adenylation of nicotinate mononucleotide (NaMN) to nicotinic acid adenine dinucleotide (NaAD). The polypeptide is Probable nicotinate-nucleotide adenylyltransferase (Dechloromonas aromatica (strain RCB)).